Reading from the N-terminus, the 312-residue chain is Glyoxylate/hydroxypyruvate reductase A (312 aa).

Residue Arg227 is part of the active site. The active-site Proton donor is the His275.

It belongs to the D-isomer specific 2-hydroxyacid dehydrogenase family. GhrA subfamily.

It is found in the cytoplasm. It catalyses the reaction glycolate + NADP(+) = glyoxylate + NADPH + H(+). The catalysed reaction is (R)-glycerate + NAD(+) = 3-hydroxypyruvate + NADH + H(+). It carries out the reaction (R)-glycerate + NADP(+) = 3-hydroxypyruvate + NADPH + H(+). In terms of biological role, catalyzes the NADPH-dependent reduction of glyoxylate and hydroxypyruvate into glycolate and glycerate, respectively. The chain is Glyoxylate/hydroxypyruvate reductase A from Salmonella dublin (strain CT_02021853).